A 945-amino-acid polypeptide reads, in one-letter code: Netrin receptor UNC5B (945 aa).

The first 26 residues, 1–26, serve as a signal peptide directing secretion; the sequence is MRARSGVRSALLLALLLCWDPTPSLA. Over 27-377 the chain is Extracellular; it reads GVDSAGQVLP…LETSGDVALY (351 aa). The region spanning 48–145 is the Ig-like domain; that stretch reads PYFLLEPQDA…SGTTKSRRAY (98 aa). Disulfide bonds link Cys-69–Cys-130, Cys-81–Cys-128, Cys-174–Cys-225, Cys-258–Cys-295, Cys-262–Cys-299, Cys-273–Cys-285, Cys-314–Cys-348, Cys-318–Cys-353, and Cys-326–Cys-338. Positions 153–242 constitute an Ig-like C2-type domain; sequence KNFDQEPLAK…KRRSTTATVI (90 aa). Asn-222 carries an N-linked (GlcNAc...) asparagine glycan. TSP type-1 domains lie at 246 to 300 and 302 to 354; these read NGGW…TVCP and DGAW…GLCV. An N-linked (GlcNAc...) asparagine glycan is attached at Asn-347. A helical membrane pass occupies residues 378–398; that stretch reads AGLVVAVFVVVAVLMAVGVIV. Over 399 to 945 the chain is Cytoplasmic; it reads YRRNCRDFDT…LVAMATDGDC (547 aa). Cys-403 carries S-palmitoyl cysteine lipidation. The ZU5 domain maps to 543 to 686; that stretch reads SSVSGTFGCL…LGTYVFMGES (144 aa). Tyr-581 carries the phosphotyrosine modification. The tract at residues 689–838 is UPA domain; the sequence is RSAVKRLQLA…AETPAGSLDA (150 aa). The segment at 707-725 is interaction with DCC; the sequence is SLEYSLRVYCLEDTPVALK. In terms of domain architecture, Death spans 865-943; it reads KICSSLDAPN…EMLVAMATDG (79 aa).

Belongs to the unc-5 family. Interacts with the cytoplasmic part of DCC. Interacts with GNAI2 via its cytoplasmic part. Interacts (via death domain) with DAPK1 (via death domain). Interacts (via extracellular domain) with FLRT2 and FLRT3 (via extracellular domain), but has higher affinity for FLRT3. Identified in a complex with FLRT3 and ADGRL3; does not interact with ADGRL3 by itself. Phosphorylated on cytoplasmic tyrosine residues. In terms of processing, palmitoylation is required for pro-apoptotic activity, but not for location at lipid rafts. Post-translationally, proteolytically cleaved by caspases during apoptosis. The cleavage does not take place when the receptor is associated with netrin ligand. Its cleavage by caspases is required to induce apoptosis. In terms of tissue distribution, highly expressed in brain. Expressed in lung during late development. Expressed during early blood vessel formation, in the semicircular canal and in a dorsal to ventral gradient in the retina.

The protein resides in the cell membrane. It localises to the membrane raft. Functionally, receptor for netrin required for axon guidance. Mediates axon repulsion of neuronal growth cones in the developing nervous system upon ligand binding. Axon repulsion in growth cones may be caused by its association with DCC that may trigger signaling for repulsion. Functions as a netrin receptor that negatively regulates vascular branching during angiogenesis. Mediates retraction of tip cell filopodia on endothelial growth cones in response to netrin. It also acts as a dependence receptor required for apoptosis induction when not associated with netrin ligand. Mediates apoptosis by activating DAPK1. In the absence of NTN1, activates DAPK1 by reducing its autoinhibitory phosphorylation at Ser-308 thereby increasing its catalytic activity. In Mus musculus (Mouse), this protein is Netrin receptor UNC5B (Unc5b).